We begin with the raw amino-acid sequence, 500 residues long: Probable cytosol aminopeptidase (500 aa).

Residues lysine 262 and aspartate 267 each coordinate Mn(2+). The active site involves lysine 274. Mn(2+) contacts are provided by aspartate 285, aspartate 344, and glutamate 346. Arginine 348 is an active-site residue.

It belongs to the peptidase M17 family. It depends on Mn(2+) as a cofactor.

It is found in the cytoplasm. The catalysed reaction is Release of an N-terminal amino acid, Xaa-|-Yaa-, in which Xaa is preferably Leu, but may be other amino acids including Pro although not Arg or Lys, and Yaa may be Pro. Amino acid amides and methyl esters are also readily hydrolyzed, but rates on arylamides are exceedingly low.. The enzyme catalyses Release of an N-terminal amino acid, preferentially leucine, but not glutamic or aspartic acids.. In terms of biological role, presumably involved in the processing and regular turnover of intracellular proteins. Catalyzes the removal of unsubstituted N-terminal amino acids from various peptides. In Ehrlichia ruminantium (strain Welgevonden), this protein is Probable cytosol aminopeptidase.